The following is a 1146-amino-acid chain: Myosin heavy chain kinase A (1146 aa).

The interval 1 to 25 (MFNIKKRKESITGIPPINVNSPQSV) is disordered. Residues 100–120 (EQMEDQLEKTMKVVRNHTDSL) are a coiled coil. Residues 158-191 (IQEKKSTSSPLVKGGISGGGGSGGDDSFDGANIS) are disordered. Gly residues predominate over residues 172 to 181 (GISGGGGSGG). 2 coiled-coil regions span residues 187-241 (GANI…KRIE) and 297-502 (SKIE…ASIS). Residues 500-551 (SISPISSVPKSPITTKRSSIILNSPPMTSQQSSPKIQDLLSSSGSSSVSGIN) form a pseudosubstrate/autoinhibitory domain region. Over residues 521–534 (LNSPPMTSQQSSPK) the composition is skewed to polar residues. Residues 521-540 (LNSPPMTSQQSSPKIQDLLS) are disordered. Residues 552–852 (ISSETGEMGI…KVGAKQLPKA (301 aa)) are catalytic. In terms of domain architecture, Alpha-type protein kinase spans 564–808 (EFDPIINKWI…VCALLDLDVK (245 aa)). Residue 778–783 (GLGNLG) participates in ATP binding. WD repeat units lie at residues 867-897 (SFRE…RVFD), 910-938 (GHRK…KVHI), 952-980 (GHTG…KVWD), 993-1021 (VHTK…YVWD), 1033-1061 (GHED…KIWD), 1073-1101 (GHWN…KVWD), and 1114-1142 (SHSL…KVWE).

The protein belongs to the protein kinase superfamily. Alpha-type protein kinase family. ALPK subfamily. In terms of assembly, oligomer. Requires Mg(2+) as cofactor. Mn(2+) serves as cofactor. In terms of processing, the N-terminus is blocked.

It carries out the reaction L-threonyl-[myosin heavy-chain] + ATP = O-phospho-L-threonyl-[myosin heavy-chain] + ADP + H(+). Catalyzes its autophosphorylation, which is needed for enzymatic activity and phosphorylates myosin II heavy chain at a threonine in the C-terminal tail region. This phosphorylation is critical for regulating the assembly and disassembly of myosin II filament, affecting myosin localization during an array of cellular contractile events, including cytokinesis and capping of cell surface receptors as well as chemotactic cell locomotion. The polypeptide is Myosin heavy chain kinase A (mhkA) (Dictyostelium discoideum (Social amoeba)).